Here is a 389-residue protein sequence, read N- to C-terminus: PqqA peptide cyclase (389 aa).

The 216-residue stretch at 20–235 (VGLPLWLLAE…TNEYRARLEA (216 aa)) folds into the Radical SAM core domain. [4Fe-4S] cluster contacts are provided by C34, C38, and C41.

Belongs to the radical SAM superfamily. PqqE family. Interacts with PqqD. The interaction is necessary for activity of PqqE. [4Fe-4S] cluster serves as cofactor.

The catalysed reaction is [PQQ precursor protein] + S-adenosyl-L-methionine = E-Y cross-linked-[PQQ precursor protein] + 5'-deoxyadenosine + L-methionine + H(+). It participates in cofactor biosynthesis; pyrroloquinoline quinone biosynthesis. In terms of biological role, catalyzes the cross-linking of a glutamate residue and a tyrosine residue in the PqqA protein as part of the biosynthesis of pyrroloquinoline quinone (PQQ). The polypeptide is PqqA peptide cyclase (Pseudomonas fluorescens (strain ATCC BAA-477 / NRRL B-23932 / Pf-5)).